The following is a 267-amino-acid chain: Aliphatic sulfonates import ATP-binding protein SsuB 1 (267 aa).

The 215-residue stretch at 35 to 249 (VRVRGLRRVF…RRADPAFDRL (215 aa)) folds into the ABC transporter domain. 67 to 74 (GRSGSGKS) is a binding site for ATP.

It belongs to the ABC transporter superfamily. Aliphatic sulfonates importer (TC 3.A.1.17.2) family. As to quaternary structure, the complex is composed of two ATP-binding proteins (SsuB), two transmembrane proteins (SsuC) and a solute-binding protein (SsuA).

The protein resides in the cell membrane. The catalysed reaction is ATP + H2O + aliphatic sulfonate-[sulfonate-binding protein]Side 1 = ADP + phosphate + aliphatic sulfonateSide 2 + [sulfonate-binding protein]Side 1.. Part of the ABC transporter complex SsuABC involved in aliphatic sulfonates import. Responsible for energy coupling to the transport system. The protein is Aliphatic sulfonates import ATP-binding protein SsuB 1 of Frankia alni (strain DSM 45986 / CECT 9034 / ACN14a).